The primary structure comprises 432 residues: Amino-acid acetyltransferase (432 aa).

In terms of domain architecture, N-acetyltransferase spans 286-425 (ELVREAAIED…ASLYNYQRNS (140 aa)).

This sequence belongs to the acetyltransferase family. ArgA subfamily.

Its subcellular location is the cytoplasm. It carries out the reaction L-glutamate + acetyl-CoA = N-acetyl-L-glutamate + CoA + H(+). It functions in the pathway amino-acid biosynthesis; L-arginine biosynthesis; N(2)-acetyl-L-ornithine from L-glutamate: step 1/4. The chain is Amino-acid acetyltransferase from Pseudomonas fluorescens (strain Pf0-1).